We begin with the raw amino-acid sequence, 25 residues long: Neuromedin-U-25 (25 aa).

Asparagine 25 carries the asparagine amide modification.

This sequence belongs to the NmU family.

It localises to the secreted. Functionally, stimulates uterine smooth muscle contraction and causes selective vasoconstriction. The polypeptide is Neuromedin-U-25 (Rana temporaria (European common frog)).